The sequence spans 396 residues: Elongation factor Tu (396 aa).

One can recognise a tr-type G domain in the interval 10–206; the sequence is KPHCNIGTIG…QVDAYIPQPE (197 aa). The tract at residues 19–26 is G1; that stretch reads GHVDHGKT. A GTP-binding site is contributed by 19-26; sequence GHVDHGKT. Mg(2+) is bound at residue T26. A G2 region spans residues 60–64; it reads GITIS. The tract at residues 81–84 is G3; that stretch reads DCPG. Residues 81 to 85 and 136 to 139 each bind GTP; these read DCPGH and NKCD. Positions 136 to 139 are G4; sequence NKCD. The segment at 174–176 is G5; the sequence is SAL.

Belongs to the TRAFAC class translation factor GTPase superfamily. Classic translation factor GTPase family. EF-Tu/EF-1A subfamily. As to quaternary structure, monomer.

Its subcellular location is the cytoplasm. The enzyme catalyses GTP + H2O = GDP + phosphate + H(+). GTP hydrolase that promotes the GTP-dependent binding of aminoacyl-tRNA to the A-site of ribosomes during protein biosynthesis. This is Elongation factor Tu from Rhodopseudomonas palustris (strain ATCC BAA-98 / CGA009).